A 225-amino-acid polypeptide reads, in one-letter code: Ribosome maturation factor RimP (225 aa).

The protein belongs to the RimP family.

The protein localises to the cytoplasm. In terms of biological role, required for maturation of 30S ribosomal subunits. The chain is Ribosome maturation factor RimP from Rhodospirillum rubrum (strain ATCC 11170 / ATH 1.1.1 / DSM 467 / LMG 4362 / NCIMB 8255 / S1).